Consider the following 696-residue polypeptide: F-box/LRR-repeat protein 5 (696 aa).

Residues 1-159 (MAPFPDEVDV…IKKQVIAQHS (159 aa)) are hemerythrin-like. The Fe(3+) site is built by His-15, His-57, Glu-58, Glu-61, His-80, His-126, and Glu-130. The F-box domain maps to 205 to 251 (STHISQLPTEILLCLFRYLGPEDLCHCGQVCSAWSDLAKTGSLWRHL). 6 LRR repeats span residues 343–367 (SSTVSSKMVRQILSLCPNLTHLDLT), 368–395 (QTDVTDSAFDSWSSLWACLSLEHLDLSG), 396–421 (CEKLTDRTLKKLSLGLGDLASPTCSE), 582–612 (CSSGGQLCLECDNRTDPSDGRRSLRFLSLSG), 613–640 (CYQVTDLGLRALSQRGGLPLLEHLNLSG), and 641–666 (CLLITEVGLQELVSACPALNDEHFYY). [2Fe-2S] cluster-binding residues include Cys-667, Cys-681, Cys-691, and Cys-692.

Part of a SCF (SKP1-cullin-F-box) protein ligase complex. It depends on [2Fe-2S] cluster as a cofactor. In terms of processing, ubiquitinated upon iron and oxygen depletion, leading to its degradation by the proteasome. Ubiquitination is regulated by the hemerythrin-like region that acts as an oxygen and iron sensor.

Its subcellular location is the cytoplasm. It localises to the perinuclear region. The protein resides in the nucleus. The protein operates within protein modification; protein ubiquitination. Functionally, component of some SCF (SKP1-cullin-F-box) protein ligase complex that plays a central role in iron homeostasis by promoting the ubiquitination and subsequent degradation of ireb2/irp2. Upon high iron and oxygen level, it specifically recognizes and binds ireb2/irp2, promoting its ubiquitination and degradation by the proteasome. The chain is F-box/LRR-repeat protein 5 (fbxl5) from Salmo salar (Atlantic salmon).